The chain runs to 839 residues: LPS-assembly protein LptD (839 aa).

A signal peptide spans 1 to 21 (MAIGITACVLSLINYQGLAYS).

This sequence belongs to the LptD family. Component of the lipopolysaccharide transport and assembly complex. Interacts with LptE and LptA.

Its subcellular location is the cell outer membrane. Functionally, together with LptE, is involved in the assembly of lipopolysaccharide (LPS) at the surface of the outer membrane. This chain is LPS-assembly protein LptD, found in Legionella pneumophila (strain Lens).